Here is a 225-residue protein sequence, read N- to C-terminus: UPF0758 protein XOO0495 (225 aa).

The 123-residue stretch at 102 to 224 (ALSDPPSVGR…PVSLAERGWL (123 aa)) folds into the MPN domain. Zn(2+) contacts are provided by H173, H175, and D186. The JAMM motif signature appears at 173 to 186 (HNHPSGNPEPSKAD).

This sequence belongs to the UPF0758 family.

This Xanthomonas oryzae pv. oryzae (strain KACC10331 / KXO85) protein is UPF0758 protein XOO0495.